A 797-amino-acid chain; its full sequence is Inulosucrase (797 aa).

Positions 1 to 36 are cleaved as a signal peptide; the sequence is MLENKNHKKISLSGKSLLMGTLSTAAIVLSASTANA. The span at 54–64 shows a compositional bias: polar residues; it reads ASSVNNENNKQ. Residues 54-176 form a disordered region; sequence ASSVNNENNK…SVKPAENATK (123 aa). Basic and acidic residues-rich tracts occupy residues 65–75 and 82–95; these read VTEKDSADKST and ANTK…ETTE. The span at 130 to 139 shows a compositional bias: low complexity; the sequence is DQKTTNAATT. The segment covering 140–167 has biased composition (basic and acidic residues); the sequence is DTKKDDVKQVEKKDSVDKTNAEENKDSS. Substrate is bound at residue W271. D272 acts as the Nucleophile in catalysis. A Ca(2+)-binding site is contributed by N317. Position 340 (S340) interacts with substrate. D419 contributes to the Ca(2+) binding site. Substrate is bound at residue 424–425; the sequence is RD. Residues Q450, W487, N489, and D521 each coordinate Ca(2+). Residues 522–524 and R542 contribute to the substrate site; that span reads EIE. The active-site Proton donor/acceptor is the E524. 3 residues coordinate Ca(2+): D660, I662, and S667. The disordered stretch occupies residues 708–766; the sequence is QPVTPIPNVPTTPETPTTPDKPEVPTTPEVPTTPETPTPEAPKNPVKKTSQSKLPKAGD. Residues 718–740 show a composition bias toward low complexity; that stretch reads TTPETPTTPDKPEVPTTPEVPTT. The LPXTG sorting signal motif lies at 761-765; it reads LPKAG. The residue at position 764 (A764) is a Pentaglycyl murein peptidoglycan amidated alanine. A propeptide spans 765–797 (removed by sortase); the sequence is GDKNSFAAVVLGAVSSILGAVGLTGVSKRKRNN.

Belongs to the glycosyl hydrolase 68 family. The cofactor is Ca(2+).

The protein localises to the secreted. The protein resides in the cell wall. It catalyses the reaction [(2-&gt;1)-beta-D-fructosyl](n) + sucrose = [(2-&gt;1)-beta-D-fructosyl](n+1) + D-glucose. Its function is as follows. Fructosyltransferase that catalyzes the polymerization of the fructose moiety of sucrose to produce inulin polymer and inulin oligosaccharides such as 1-kestose and nystose. This Lactobacillus johnsonii (strain CNCM I-12250 / La1 / NCC 533) protein is Inulosucrase.